The chain runs to 214 residues: UPF0111 protein MJ0629 (214 aa).

It belongs to the UPF0111 family.

In Methanocaldococcus jannaschii (strain ATCC 43067 / DSM 2661 / JAL-1 / JCM 10045 / NBRC 100440) (Methanococcus jannaschii), this protein is UPF0111 protein MJ0629.